We begin with the raw amino-acid sequence, 397 residues long: Elongation factor Tu (397 aa).

Positions 10–207 constitute a tr-type G domain; that stretch reads KPHVNVGTIG…ACDSYIPDPQ (198 aa). Positions 19–26 are G1; the sequence is GHIDHGKT. A GTP-binding site is contributed by 19-26; it reads GHIDHGKT. T26 lines the Mg(2+) pocket. A G2 region spans residues 60 to 64; the sequence is GITIA. Residues 81 to 84 form a G3 region; sequence DCPG. GTP contacts are provided by residues 81-85 and 136-139; these read DCPGH and NKCD. A G4 region spans residues 136–139; that stretch reads NKCD. Residues 174 to 176 are G5; it reads SAL.

It belongs to the TRAFAC class translation factor GTPase superfamily. Classic translation factor GTPase family. EF-Tu/EF-1A subfamily. Monomer.

It localises to the cytoplasm. The catalysed reaction is GTP + H2O = GDP + phosphate + H(+). GTP hydrolase that promotes the GTP-dependent binding of aminoacyl-tRNA to the A-site of ribosomes during protein biosynthesis. The protein is Elongation factor Tu of Lawsonia intracellularis (strain PHE/MN1-00).